Here is a 177-residue protein sequence, read N- to C-terminus: Protein TERMINAL FLOWER 1 (177 aa).

It belongs to the phosphatidylethanolamine-binding protein family. In terms of tissue distribution, expressed below the apical dome of inflorescence and coflorescence meristems, and in inflorescence stem.

The protein resides in the cytoplasm. Its function is as follows. Controls inflorescence meristem identity and is required for maintenance of an indeterminate inflorescence. Prevents the expression of 'APETALA1' and 'LEAFY'. Also plays a role in the regulation of the time of flowering in the long-day flowering pathway. May form complexes with phosphorylated ligands by interfering with kinases and their effectors. The protein is Protein TERMINAL FLOWER 1 (TFL1) of Arabidopsis thaliana (Mouse-ear cress).